The primary structure comprises 135 residues: uncharacterized protein (135 aa).

Helical transmembrane passes span 12 to 32 (IPIL…YNGI), 68 to 88 (SMIG…AKFC), and 98 to 118 (GILY…FYLF).

It is found in the cell membrane. This is an uncharacterized protein from Methanocaldococcus jannaschii (strain ATCC 43067 / DSM 2661 / JAL-1 / JCM 10045 / NBRC 100440) (Methanococcus jannaschii).